The sequence spans 643 residues: Inner kinetochore subunit cnp3 (643 aa).

2 disordered regions span residues 55 to 209 (SIHL…AFPD) and 224 to 386 (SIKD…QSDS). Composition is skewed to low complexity over residues 85 to 97 (AASD…SSSD) and 104 to 125 (DIPS…GSSG). A compositionally biased stretch (basic and acidic residues) spans 166–185 (DFSRIKASPDRKKFEPRRST). Polar residues-rich tracts occupy residues 235 to 261 (YIQT…PSKQ), 295 to 304 (LNRSLANNSQ), and 313 to 322 (KPLQESSINS). Composition is skewed to basic residues over residues 332–341 (VKRKRGRPRK) and 360–370 (GAKKPAIRNAK). The segment at residues 333–345 (KRKRGRPRKNKLE) is a DNA-binding region (a.T hook).

Belongs to the CENP-C/MIF2 family. Component of the inner kinetochore constitutive centromere-associated network (CCAN) (also known as central kinetochore Sim4 complex in fission yeast), which is composed of at least cnl2, cnp3, cnp20, fta1, fta2, fta3, fta4, fta6, fta7, mal2, mhf1, mhf2, mis6, mis15, mis17, sim4 and wip1.

The protein localises to the nucleus. The protein resides in the nucleoplasm. In terms of biological role, component of the kinetochore, a multiprotein complex that assembles on centromeric DNA and attaches chromosomes to spindle microtubules, mediating chromosome segregation and sister chromatid segregation during meiosis and mitosis. Component of the inner kinetochore constitutive centromere-associated network (CCAN), which serves as a structural platform for outer kinetochore assembly. The chain is Inner kinetochore subunit cnp3 (cnp3) from Schizosaccharomyces pombe (strain 972 / ATCC 24843) (Fission yeast).